The sequence spans 127 residues: S-adenosylmethionine decarboxylase proenzyme 2 (127 aa).

The active-site Schiff-base intermediate with substrate; via pyruvic acid is the Ser-63. Ser-63 carries the post-translational modification Pyruvic acid (Ser); by autocatalysis. The active-site Proton acceptor; for processing activity is His-68. Residue Cys-83 is the Proton donor; for catalytic activity of the active site.

Belongs to the prokaryotic AdoMetDC family. Type 1 subfamily. In terms of assembly, heterotetramer of two alpha and two beta chains arranged as a dimer of alpha/beta heterodimers. Pyruvate is required as a cofactor. Is synthesized initially as an inactive proenzyme. Formation of the active enzyme involves a self-maturation process in which the active site pyruvoyl group is generated from an internal serine residue via an autocatalytic post-translational modification. Two non-identical subunits are generated from the proenzyme in this reaction, and the pyruvate is formed at the N-terminus of the alpha chain, which is derived from the carboxyl end of the proenzyme. The post-translation cleavage follows an unusual pathway, termed non-hydrolytic serinolysis, in which the side chain hydroxyl group of the serine supplies its oxygen atom to form the C-terminus of the beta chain, while the remainder of the serine residue undergoes an oxidative deamination to produce ammonia and the pyruvoyl group blocking the N-terminus of the alpha chain.

The catalysed reaction is S-adenosyl-L-methionine + H(+) = S-adenosyl 3-(methylsulfanyl)propylamine + CO2. Its pathway is amine and polyamine biosynthesis; S-adenosylmethioninamine biosynthesis; S-adenosylmethioninamine from S-adenosyl-L-methionine: step 1/1. Catalyzes the decarboxylation of S-adenosylmethionine to S-adenosylmethioninamine (dcAdoMet), the propylamine donor required for the synthesis of the polyamines spermine and spermidine from the diamine putrescine. The sequence is that of S-adenosylmethionine decarboxylase proenzyme 2 from Halalkalibacterium halodurans (strain ATCC BAA-125 / DSM 18197 / FERM 7344 / JCM 9153 / C-125) (Bacillus halodurans).